The following is a 560-amino-acid chain: Zorya protein ZorC (560 aa).

In terms of biological role, component of antiviral defense system Zorya type I, composed of ZorA, ZorB, ZorC and ZorD. Expression of Zorya type I in E.coli (strain MG1655) confers 10,000-fold resistance to phage SECphi27, 100-fold resistance to lambda, and 10-fold resistance to T7. While most T7 infected Zorya-containing cells undergo abortive infection, a minority produce viable phage progeny. These eventually accumulate to a high multiplicity of infection, leading to culture collapse by 2 hours after initial infection. ZorA and ZorB probably assemble in the cell inner membrane and exert their effect there. The polypeptide is Zorya protein ZorC (Escherichia coli O139:H28 (strain E24377A / ETEC)).